Here is a 64-residue protein sequence, read N- to C-terminus: Translation machinery-associated protein 7 homolog (64 aa).

The segment at 1-64 is disordered; sequence MTGREGGKKK…TGGIKKSGKK (64 aa). The stretch at 21–50 forms a coiled coil; the sequence is EMDEEDMAFKQKQKEQQKAMEAAKQKAAKG. Basic and acidic residues predominate over residues 27 to 44; it reads MAFKQKQKEQQKAMEAAK.

This sequence belongs to the TMA7 family.

The protein is Translation machinery-associated protein 7 homolog of Aedes aegypti (Yellowfever mosquito).